The following is a 362-amino-acid chain: Adenosine deaminase (362 aa).

Residues His19 and His21 each contribute to the Zn(2+) site. The substrate site is built by His21, Asp23, and Gly181. His208 contributes to the Zn(2+) binding site. Glu211 (proton donor) is an active-site residue. A Zn(2+)-binding site is contributed by Asp300.

The protein belongs to the metallo-dependent hydrolases superfamily. Adenosine and AMP deaminases family. Adenosine deaminase subfamily. Requires Zn(2+) as cofactor.

The catalysed reaction is adenosine + H2O + H(+) = inosine + NH4(+). It catalyses the reaction 2'-deoxyadenosine + H2O + H(+) = 2'-deoxyinosine + NH4(+). Its function is as follows. Catalyzes the hydrolytic deamination of adenosine and 2-deoxyadenosine. This is Adenosine deaminase from Mycobacterium sp. (strain MCS).